The primary structure comprises 100 residues: Small ribosomal subunit protein uS14c (100 aa).

Belongs to the universal ribosomal protein uS14 family. Part of the 30S ribosomal subunit.

Its subcellular location is the plastid. The protein localises to the chloroplast. Binds 16S rRNA, required for the assembly of 30S particles. The protein is Small ribosomal subunit protein uS14c of Helianthus annuus (Common sunflower).